Here is a 214-residue protein sequence, read N- to C-terminus: Small ribosomal subunit protein eS6 (214 aa).

Belongs to the eukaryotic ribosomal protein eS6 family.

This chain is Small ribosomal subunit protein eS6, found in Saccharolobus islandicus (strain L.S.2.15 / Lassen #1) (Sulfolobus islandicus).